A 92-amino-acid polypeptide reads, in one-letter code: Putative regulatory protein Tpet_0986 (92 aa).

This sequence belongs to the RemA family.

The protein is Putative regulatory protein Tpet_0986 of Thermotoga petrophila (strain ATCC BAA-488 / DSM 13995 / JCM 10881 / RKU-1).